Here is a 181-residue protein sequence, read N- to C-terminus: Transcription termination/antitermination protein NusG (181 aa).

One can recognise a KOW domain in the interval proline 130–serine 161.

The protein belongs to the NusG family. As to quaternary structure, monomer. Interacts with the transcription termination factor Rho and with RNA polymerase.

Functionally, participates in transcription elongation, termination and antitermination. In the absence of Rho, increases the rate of transcription elongation by the RNA polymerase (RNAP), probably by partially suppressing pausing. In the presence of Rho, modulates most Rho-dependent termination events by interacting with the RNAP to render the complex more susceptible to the termination activity of Rho. May be required to overcome a kinetic limitation of Rho to function at certain terminators. Also involved in ribosomal RNA transcriptional antitermination. The sequence is that of Transcription termination/antitermination protein NusG from Yersinia pestis.